The sequence spans 728 residues: 1,4-alpha-glucan branching enzyme GlgB (728 aa).

The active-site Nucleophile is the Asp-405. Glu-458 (proton donor) is an active-site residue.

This sequence belongs to the glycosyl hydrolase 13 family. GlgB subfamily. Monomer.

It catalyses the reaction Transfers a segment of a (1-&gt;4)-alpha-D-glucan chain to a primary hydroxy group in a similar glucan chain.. It participates in glycan biosynthesis; glycogen biosynthesis. In terms of biological role, catalyzes the formation of the alpha-1,6-glucosidic linkages in glycogen by scission of a 1,4-alpha-linked oligosaccharide from growing alpha-1,4-glucan chains and the subsequent attachment of the oligosaccharide to the alpha-1,6 position. The protein is 1,4-alpha-glucan branching enzyme GlgB of Citrobacter koseri (strain ATCC BAA-895 / CDC 4225-83 / SGSC4696).